The sequence spans 390 residues: Putative glutamate--cysteine ligase 2 (390 aa).

Belongs to the glutamate--cysteine ligase type 2 family. YbdK subfamily.

It catalyses the reaction L-cysteine + L-glutamate + ATP = gamma-L-glutamyl-L-cysteine + ADP + phosphate + H(+). Functionally, ATP-dependent carboxylate-amine ligase which exhibits weak glutamate--cysteine ligase activity. In Chloroflexus aggregans (strain MD-66 / DSM 9485), this protein is Putative glutamate--cysteine ligase 2.